The chain runs to 347 residues: Aurora kinase A- and ninein-interacting protein (347 aa).

Residues Q182–H347 are interaction with AURKA. Residues R273 to H347 form an interaction with RBBP8/CtIP region. S284 carries the post-translational modification Phosphoserine. Positions V301 to D322 are enriched in polar residues. Positions V301–T325 are disordered.

It belongs to the AUNIP family. In terms of assembly, interacts (via C-terminus) with AURKA (via C-terminus). Interacts (via N-terminus) with NIN; this interaction blocks NIN phosphorylation by both AURKA and GSK3B. Identified in a complex with NIN and AURKA. Interacts with RBBP8/CtIP.

It is found in the nucleus. It localises to the chromosome. The protein localises to the cytoplasm. The protein resides in the cytoskeleton. Its subcellular location is the microtubule organizing center. It is found in the centrosome. It localises to the spindle pole. Functionally, DNA-binding protein that accumulates at DNA double-strand breaks (DSBs) following DNA damage and promotes DNA resection and homologous recombination. Serves as a sensor of DNA damage: binds DNA with a strong preference for DNA substrates that mimic structures generated at stalled replication forks, and anchors RBBP8/CtIP to DSB sites to promote DNA end resection and ensuing homologous recombination repair. Inhibits non-homologous end joining (NHEJ). Required for the dynamic movement of AURKA at the centrosomes and spindle apparatus during the cell cycle. The polypeptide is Aurora kinase A- and ninein-interacting protein (Rattus norvegicus (Rat)).